A 155-amino-acid chain; its full sequence is Putative ATP synthase protein YMF19-like protein (155 aa).

Transmembrane regions (helical) follow at residues 23 to 43 (FLWLCLFYITFYFVLYSVLVF), 89 to 109 (WRALILAYLTSIYFFPILGSF), and 117 to 137 (VDFGYIPTVCILLYVIFLFFF).

The protein belongs to the ATPase protein YMF19 family.

The protein localises to the mitochondrion membrane. In Marchantia polymorpha (Common liverwort), this protein is Putative ATP synthase protein YMF19-like protein (YMF18).